The primary structure comprises 273 residues: Arginine and glutamate-rich protein 1 (273 aa).

2 stretches are compositionally biased toward basic residues: residues 1-29 and 37-58; these read MGRS…RSRS and VRKR…RSRS. The segment at 1–74 is necessary and sufficient for RNA binding; the sequence is MGRSRSRSSS…VSRRERDRER (74 aa). The interval 1–113 is disordered; sequence MGRSRSRSSS…EEKKAEFERQ (113 aa). Phosphoserine is present on residues Ser58 and Ser60. Thr61 is modified (phosphothreonine). 2 stretches are compositionally biased toward basic and acidic residues: residues 66–84 and 93–113; these read SRRE…RIDI and SSLD…FERQ. Residues 75–273 are necessary and sufficient for transcriptional regulation; the sequence is ASSPPDRIDI…KLSFSLKTQD (199 aa). A phosphoserine mark is found at Ser76 and Ser77. Positions 172–176 match the LXXLL motif 1; degenerate motif; it reads LLEEL. The LXXLL motif 2; degenerate motif lies at 201-205; the sequence is LERIL. A compositionally biased stretch (basic and acidic residues) spans 238–253; sequence MKLEQERQRQQKEEQK. The segment at 238–273 is disordered; it reads MKLEQERQRQQKEEQKIILGKGKSRPKLSFSLKTQD. A Phosphoserine modification is found at Ser266.

Belongs to the ARGLU1 family. Interacts with MED1; the interaction is direct. Interacts with PUF60, U2AF2 and JMJD6; may interact with other proteins involved in RNA processing and splicing.

The protein localises to the nucleus. Its subcellular location is the nucleus speckle. It is found in the chromosome. Functionally, dual function regulator of gene expression; regulator of transcription and modulator of alternative splicing. General coactivator of nuclear receptor-induced gene expression, including genes activated by the glucocorticoid receptor NR3C1. Binds to a subset of pre-mRNAs and to components of the spliceosome machinery to directly modulate basal alternative splicing; involved in simple and complex cassette exon splicing events. Binds its own pre-mRNA and regulates its alternative splicing and degradation; one of the alternatively spliced products is a stable intronic sequence RNA (sisRNA) that binds the protein to regulate its ability to affect splicing. Binding of the sisRNA stimulates phase separation and localization to nuclear speckles, which may contribute to activation of nuclear receptor-induced gene expression. May also indirectly modulate alternative splicing. Regulates transcription of genes involved in heart development, neuronal cell function, protein localization and chromatin localization. Regulates splicing of genes involved in neurogenesis and chromatin organization. Essential for central nervous system development. Required for the estrogen-dependent expression of ESR1 target genes. Can act in cooperation with MED1. The protein is Arginine and glutamate-rich protein 1 (ARGLU1) of Bos taurus (Bovine).